A 64-amino-acid polypeptide reads, in one-letter code: Large ribosomal subunit protein bL35 (64 aa).

Residues 1–10 (MPKMKTNSAA) show a composition bias toward polar residues. Residues 1–64 (MPKMKTNSAA…AKKLHQLLQK (64 aa)) are disordered. The segment covering 54 to 64 (QAKKLHQLLQK) has biased composition (basic residues).

This sequence belongs to the bacterial ribosomal protein bL35 family.

In Bifidobacterium longum (strain NCC 2705), this protein is Large ribosomal subunit protein bL35.